A 147-amino-acid polypeptide reads, in one-letter code: Neocarzinostatin (147 aa).

The first 34 residues, 1-34, serve as a signal peptide directing secretion; sequence MVPISIIRNRVAKVAVGSAAVLGLAVGFQTPAVA. Cystine bridges form between Cys71/Cys81 and Cys122/Cys127.

Belongs to the neocarzinostatin family.

Its function is as follows. NCS has antibiotic activity (for Gram-positive bacteria) and antitumor activity (for certain mouse tumors). NCS binds non-covalently to a chromophore which is the cytotoxic and mutagenic component of the antibiotic. The chromophore binds to DNA as a weak intercalator and causes single- and double-strand breaks. The protein is Neocarzinostatin (ncsA) of Streptomyces carzinostaticus.